Reading from the N-terminus, the 359-residue chain is Bergaptol O-methyltransferase (359 aa).

Position 126 (histidine 126) interacts with bergaptol. S-adenosyl-L-homocysteine is bound by residues serine 179, glycine 203, aspartate 226, aspartate 246, and lysine 260. Position 264 (histidine 264) interacts with bergaptol. Histidine 264 serves as the catalytic Proton acceptor.

Belongs to the class I-like SAM-binding methyltransferase superfamily. Cation-independent O-methyltransferase family. COMT subfamily.

The enzyme catalyses a 5-hydroxyfurocoumarin + S-adenosyl-L-methionine = a 5-methoxyfurocoumarin + S-adenosyl-L-homocysteine + H(+). It carries out the reaction bergaptol + S-adenosyl-L-methionine = bergapten + S-adenosyl-L-homocysteine. With respect to regulation, inhibited by Cu(2+), Ni(2+) and Co(2+). This Glehnia littoralis (Beach silvertop) protein is Bergaptol O-methyltransferase.